The following is a 205-amino-acid chain: Thiamine-phosphate synthase (205 aa).

4-amino-2-methyl-5-(diphosphooxymethyl)pyrimidine contacts are provided by residues 36–40 (QYRRK) and Asp68. Mg(2+) is bound by residues Asp69 and Asp88. 4-amino-2-methyl-5-(diphosphooxymethyl)pyrimidine is bound at residue Ser106. 2-[(2R,5Z)-2-carboxy-4-methylthiazol-5(2H)-ylidene]ethyl phosphate is bound at residue 132 to 134 (SPT). Position 135 (Lys135) interacts with 4-amino-2-methyl-5-(diphosphooxymethyl)pyrimidine. Residues Gly162 and 182-183 (IS) each bind 2-[(2R,5Z)-2-carboxy-4-methylthiazol-5(2H)-ylidene]ethyl phosphate.

The protein belongs to the thiamine-phosphate synthase family. Requires Mg(2+) as cofactor.

The catalysed reaction is 2-[(2R,5Z)-2-carboxy-4-methylthiazol-5(2H)-ylidene]ethyl phosphate + 4-amino-2-methyl-5-(diphosphooxymethyl)pyrimidine + 2 H(+) = thiamine phosphate + CO2 + diphosphate. It carries out the reaction 2-(2-carboxy-4-methylthiazol-5-yl)ethyl phosphate + 4-amino-2-methyl-5-(diphosphooxymethyl)pyrimidine + 2 H(+) = thiamine phosphate + CO2 + diphosphate. It catalyses the reaction 4-methyl-5-(2-phosphooxyethyl)-thiazole + 4-amino-2-methyl-5-(diphosphooxymethyl)pyrimidine + H(+) = thiamine phosphate + diphosphate. Its pathway is cofactor biosynthesis; thiamine diphosphate biosynthesis; thiamine phosphate from 4-amino-2-methyl-5-diphosphomethylpyrimidine and 4-methyl-5-(2-phosphoethyl)-thiazole: step 1/1. Functionally, condenses 4-methyl-5-(beta-hydroxyethyl)thiazole monophosphate (THZ-P) and 2-methyl-4-amino-5-hydroxymethyl pyrimidine pyrophosphate (HMP-PP) to form thiamine monophosphate (TMP). This chain is Thiamine-phosphate synthase, found in Caldivirga maquilingensis (strain ATCC 700844 / DSM 13496 / JCM 10307 / IC-167).